The sequence spans 250 residues: Probable transcriptional regulatory protein Ppha_0657 (250 aa).

Belongs to the TACO1 family.

The protein resides in the cytoplasm. This Pelodictyon phaeoclathratiforme (strain DSM 5477 / BU-1) protein is Probable transcriptional regulatory protein Ppha_0657.